Consider the following 320-residue polypeptide: UV DNA damage endonuclease (320 aa).

The protein belongs to the uve1/UvsE family.

Functionally, component in a DNA repair pathway. Removal of UV LIGHT damaged nucleotides. Recognizes pyrimidine dimers and cleave a phosphodiester bond immediately 5' to the lesion. This Bacillus velezensis (strain DSM 23117 / BGSC 10A6 / LMG 26770 / FZB42) (Bacillus amyloliquefaciens subsp. plantarum) protein is UV DNA damage endonuclease.